Here is a 189-residue protein sequence, read N- to C-terminus: Xanthine phosphoribosyltransferase (189 aa).

Xanthine contacts are provided by Leu20 and Asn27. Position 128-132 (128-132 (ANGEA)) interacts with 5-phospho-alpha-D-ribose 1-diphosphate. Lys156 serves as a coordination point for xanthine.

Belongs to the purine/pyrimidine phosphoribosyltransferase family. Xpt subfamily. As to quaternary structure, homodimer.

It localises to the cytoplasm. It catalyses the reaction XMP + diphosphate = xanthine + 5-phospho-alpha-D-ribose 1-diphosphate. It functions in the pathway purine metabolism; XMP biosynthesis via salvage pathway; XMP from xanthine: step 1/1. Functionally, converts the preformed base xanthine, a product of nucleic acid breakdown, to xanthosine 5'-monophosphate (XMP), so it can be reused for RNA or DNA synthesis. The sequence is that of Xanthine phosphoribosyltransferase from Clostridium acetobutylicum (strain ATCC 824 / DSM 792 / JCM 1419 / IAM 19013 / LMG 5710 / NBRC 13948 / NRRL B-527 / VKM B-1787 / 2291 / W).